The primary structure comprises 306 residues: Probable GTP 3',8-cyclase (306 aa).

One can recognise a Radical SAM core domain in the interval 5 to 232 (RFGRPVTNLR…RRRKYFLPVD (228 aa)). Arg14 contributes to the GTP binding site. Cys21 and Cys25 together coordinate [4Fe-4S] cluster. Residue Tyr27 coordinates S-adenosyl-L-methionine. Cys28 serves as a coordination point for [4Fe-4S] cluster. Lys61 contributes to the GTP binding site. Gly65 provides a ligand contact to S-adenosyl-L-methionine. Thr90 serves as a coordination point for GTP. Position 114 (Ser114) interacts with S-adenosyl-L-methionine. Lys150 lines the GTP pocket. Met189 serves as a coordination point for S-adenosyl-L-methionine. [4Fe-4S] cluster-binding residues include Cys250 and Cys253. 255–257 (RLR) lines the GTP pocket. [4Fe-4S] cluster is bound at residue Cys267.

This sequence belongs to the radical SAM superfamily. MoaA family. The cofactor is [4Fe-4S] cluster.

The enzyme catalyses GTP + AH2 + S-adenosyl-L-methionine = (8S)-3',8-cyclo-7,8-dihydroguanosine 5'-triphosphate + 5'-deoxyadenosine + L-methionine + A + H(+). It participates in cofactor biosynthesis; molybdopterin biosynthesis. Functionally, catalyzes the cyclization of GTP to (8S)-3',8-cyclo-7,8-dihydroguanosine 5'-triphosphate. This Pyrococcus abyssi (strain GE5 / Orsay) protein is Probable GTP 3',8-cyclase.